The sequence spans 203 residues: Thymidylate kinase (203 aa).

ATP is bound at residue glycine 14 to serine 21.

It belongs to the thymidylate kinase family.

The enzyme catalyses dTMP + ATP = dTDP + ADP. Functionally, phosphorylation of dTMP to form dTDP in both de novo and salvage pathways of dTTP synthesis. This Rickettsia canadensis (strain McKiel) protein is Thymidylate kinase.